The primary structure comprises 432 residues: GTPase Obg (432 aa).

Residues 1 to 158 enclose the Obg domain; it reads MFVDQIKIEV…RKLKLELKVL (158 aa). Residues 159-335 form the OBG-type G domain; the sequence is ADVGLVGFPS…LTHRTADVLE (177 aa). Residues 165–172, 190–194, 212–215, 282–285, and 316–318 each bind GTP; these read GFPSVGKS, FTTLV, DLPG, SKMD, and SSL. 2 residues coordinate Mg(2+): Ser-172 and Thr-192. Residues 354–432 form the OCT domain; sequence TFKEDEPAFK…IEDFTFEFVE (79 aa).

This sequence belongs to the TRAFAC class OBG-HflX-like GTPase superfamily. OBG GTPase family. In terms of assembly, monomer. Requires Mg(2+) as cofactor.

It localises to the cytoplasm. Functionally, an essential GTPase which binds GTP, GDP and possibly (p)ppGpp with moderate affinity, with high nucleotide exchange rates and a fairly low GTP hydrolysis rate. Plays a role in control of the cell cycle, stress response, ribosome biogenesis and in those bacteria that undergo differentiation, in morphogenesis control. This chain is GTPase Obg, found in Ligilactobacillus salivarius (strain UCC118) (Lactobacillus salivarius).